The primary structure comprises 367 residues: tRNA pseudouridine synthase D (367 aa).

Catalysis depends on Asp80, which acts as the Nucleophile. The 161-residue stretch at 156–316 (GIPNWFGEQR…LKQERRALRL (161 aa)) folds into the TRUD domain.

It belongs to the pseudouridine synthase TruD family.

It carries out the reaction uridine(13) in tRNA = pseudouridine(13) in tRNA. In terms of biological role, responsible for synthesis of pseudouridine from uracil-13 in transfer RNAs. The protein is tRNA pseudouridine synthase D of Xanthomonas campestris pv. campestris (strain 8004).